The chain runs to 559 residues: Transmembrane E3 ubiquitin-protein ligase FLY2 (559 aa).

An N-terminal signal peptide occupies residues 1–29 (MNNLGNFGVWGFGFFSLSIWFAVLQQANG). Topologically, residues 30–259 (LRPIRETARS…TSINVEVYYN (230 aa)) are lumenal. A helical membrane pass occupies residues 260-280 (KAVNYTLMVTFVSFLQVLLLI). At 281–294 (RQMEHSNTQSGAAK) the chain is on the cytoplasmic side. Residues 295–315 (VSIVMIGQQAIMDSYLCLLHL) traverse the membrane as a helical segment. Topologically, residues 316-318 (TAG) are lumenal. Residues 319–339 (ILVESLFNAFATAAFFKFVVF) form a helical membrane-spanning segment. Topologically, residues 340-370 (SIFEMRYLLSIWKATRPSTSGEGWETMRREL) are cytoplasmic. The helical transmembrane segment at 371 to 391 (SFLYSRFYGILLGGILLMYEF) threads the bilayer. Topologically, residues 392-394 (HNY) are lumenal. Residues 395–415 (MRPILLLMYSFWIPQIVANVV) form a helical membrane-spanning segment. Over 416–423 (RDSRKPLH) the chain is Cytoplasmic. Residues 424-444 (PYYILGMTVTRLAIPLYVFGC) form a helical membrane-spanning segment. At 445–458 (PKNFMRVEPSKAWC) the chain is on the lumenal side. The helical transmembrane segment at 459-479 (VSLCAFMGFQAGVLLLQHYFG) threads the bilayer. Over 480 to 559 (SRCFVPRKLL…PTCRRPLPPA (80 aa)) the chain is Cytoplasmic. The RING-type; atypical zinc finger occupies 509–553 (CVICMTTIDLRHRINDCMVTPCEHIFHSGCLQRWMDIKMECPTCR).

As to expression, highly expressed in stems. Expressed in root xylem and seed coat.

The protein resides in the endomembrane system. The catalysed reaction is S-ubiquitinyl-[E2 ubiquitin-conjugating enzyme]-L-cysteine + [acceptor protein]-L-lysine = [E2 ubiquitin-conjugating enzyme]-L-cysteine + N(6)-ubiquitinyl-[acceptor protein]-L-lysine.. The protein operates within protein modification; protein ubiquitination. E3 ubiquitin-protein ligase that may be involved in xylem development. The chain is Transmembrane E3 ubiquitin-protein ligase FLY2 from Arabidopsis thaliana (Mouse-ear cress).